The chain runs to 353 residues: Photosystem II protein D1 (353 aa).

Threonine 2 bears the N-acetylthreonine mark. A Phosphothreonine modification is found at threonine 2. The next 3 helical transmembrane spans lie at 29–46 (YIGWFGVLMIPTLLTATS), 118–133 (HFLLGVACYMGREWEL), and 142–156 (WIAVAYSAPVAAAAA). Histidine 118 serves as a coordination point for chlorophyll a. A pheophytin a-binding site is contributed by tyrosine 126. Residues aspartate 170 and glutamate 189 each contribute to the [CaMn4O5] cluster site. Residues 197–218 (FHMLGVAGVFGGSLFSAMHGSL) form a helical membrane-spanning segment. Histidine 198 contributes to the chlorophyll a binding site. A quinone contacts are provided by residues histidine 215 and 264-265 (SF). Histidine 215 provides a ligand contact to Fe cation. Fe cation is bound at residue histidine 272. The helical transmembrane segment at 274–288 (FLAAWPVVGIWFTAL) threads the bilayer. [CaMn4O5] cluster contacts are provided by histidine 332, glutamate 333, aspartate 342, and alanine 344. Positions 345-353 (SVEAPSVKA) are excised as a propeptide.

Belongs to the reaction center PufL/M/PsbA/D family. In terms of assembly, PSII is composed of 1 copy each of membrane proteins PsbA, PsbB, PsbC, PsbD, PsbE, PsbF, PsbH, PsbI, PsbJ, PsbK, PsbL, PsbM, PsbT, PsbX, PsbY, PsbZ, Psb30/Ycf12, at least 3 peripheral proteins of the oxygen-evolving complex and a large number of cofactors. It forms dimeric complexes. Requires The D1/D2 heterodimer binds P680, chlorophylls that are the primary electron donor of PSII, and subsequent electron acceptors. It shares a non-heme iron and each subunit binds pheophytin, quinone, additional chlorophylls, carotenoids and lipids. D1 provides most of the ligands for the Mn4-Ca-O5 cluster of the oxygen-evolving complex (OEC). There is also a Cl(-1) ion associated with D1 and D2, which is required for oxygen evolution. The PSII complex binds additional chlorophylls, carotenoids and specific lipids. as cofactor. Post-translationally, tyr-161 forms a radical intermediate that is referred to as redox-active TyrZ, YZ or Y-Z. In terms of processing, C-terminally processed by CTPA; processing is essential to allow assembly of the oxygen-evolving complex and thus photosynthetic growth.

It localises to the plastid. The protein resides in the chloroplast thylakoid membrane. The catalysed reaction is 2 a plastoquinone + 4 hnu + 2 H2O = 2 a plastoquinol + O2. Functionally, photosystem II (PSII) is a light-driven water:plastoquinone oxidoreductase that uses light energy to abstract electrons from H(2)O, generating O(2) and a proton gradient subsequently used for ATP formation. It consists of a core antenna complex that captures photons, and an electron transfer chain that converts photonic excitation into a charge separation. The D1/D2 (PsbA/PsbD) reaction center heterodimer binds P680, the primary electron donor of PSII as well as several subsequent electron acceptors. This chain is Photosystem II protein D1, found in Angiopteris evecta (Mule's foot fern).